We begin with the raw amino-acid sequence, 483 residues long: Glutamyl-tRNA(Gln) amidotransferase subunit A (483 aa).

Catalysis depends on charge relay system residues lysine 77 and serine 152. Serine 176 (acyl-ester intermediate) is an active-site residue.

Belongs to the amidase family. GatA subfamily. In terms of assembly, heterotrimer of A, B and C subunits.

The catalysed reaction is L-glutamyl-tRNA(Gln) + L-glutamine + ATP + H2O = L-glutaminyl-tRNA(Gln) + L-glutamate + ADP + phosphate + H(+). Functionally, allows the formation of correctly charged Gln-tRNA(Gln) through the transamidation of misacylated Glu-tRNA(Gln) in organisms which lack glutaminyl-tRNA synthetase. The reaction takes place in the presence of glutamine and ATP through an activated gamma-phospho-Glu-tRNA(Gln). The protein is Glutamyl-tRNA(Gln) amidotransferase subunit A of Listeria innocua serovar 6a (strain ATCC BAA-680 / CLIP 11262).